Reading from the N-terminus, the 448-residue chain is 3-phosphoshikimate 1-carboxyvinyltransferase (448 aa).

K38, S39, and R43 together coordinate 3-phosphoshikimate. Residue K38 coordinates phosphoenolpyruvate. Phosphoenolpyruvate is bound by residues G111 and R140. The 3-phosphoshikimate site is built by S185, Q187, D335, and K362. Residue Q187 participates in phosphoenolpyruvate binding. The active-site Proton acceptor is the D335. Phosphoenolpyruvate contacts are provided by R366 and R408.

It belongs to the EPSP synthase family. In terms of assembly, monomer.

Its subcellular location is the cytoplasm. The enzyme catalyses 3-phosphoshikimate + phosphoenolpyruvate = 5-O-(1-carboxyvinyl)-3-phosphoshikimate + phosphate. It functions in the pathway metabolic intermediate biosynthesis; chorismate biosynthesis; chorismate from D-erythrose 4-phosphate and phosphoenolpyruvate: step 6/7. Its function is as follows. Catalyzes the transfer of the enolpyruvyl moiety of phosphoenolpyruvate (PEP) to the 5-hydroxyl of shikimate-3-phosphate (S3P) to produce enolpyruvyl shikimate-3-phosphate and inorganic phosphate. This Synechococcus elongatus (strain ATCC 33912 / PCC 7942 / FACHB-805) (Anacystis nidulans R2) protein is 3-phosphoshikimate 1-carboxyvinyltransferase.